The primary structure comprises 311 residues: Urease accessory protein UreD 2 (311 aa).

It belongs to the UreD family. As to quaternary structure, ureD, UreF and UreG form a complex that acts as a GTP-hydrolysis-dependent molecular chaperone, activating the urease apoprotein by helping to assemble the nickel containing metallocenter of UreC. The UreE protein probably delivers the nickel.

It is found in the cytoplasm. Required for maturation of urease via the functional incorporation of the urease nickel metallocenter. This chain is Urease accessory protein UreD 2, found in Methylorubrum extorquens (strain PA1) (Methylobacterium extorquens).